The following is a 342-amino-acid chain: Glycerol-3-phosphate dehydrogenase [NAD(P)+] (342 aa).

Residues Ser13, Trp14, and Lys108 each contribute to the NADPH site. Sn-glycerol 3-phosphate-binding residues include Lys108, Gly139, and Ser141. Ala143 is a binding site for NADPH. Positions 194, 247, 257, 258, and 259 each coordinate sn-glycerol 3-phosphate. Lys194 serves as the catalytic Proton acceptor. Arg258 contacts NADPH. Residues Val282 and Glu284 each contribute to the NADPH site.

It belongs to the NAD-dependent glycerol-3-phosphate dehydrogenase family.

The protein localises to the cytoplasm. It carries out the reaction sn-glycerol 3-phosphate + NAD(+) = dihydroxyacetone phosphate + NADH + H(+). The catalysed reaction is sn-glycerol 3-phosphate + NADP(+) = dihydroxyacetone phosphate + NADPH + H(+). Its pathway is membrane lipid metabolism; glycerophospholipid metabolism. Its function is as follows. Catalyzes the reduction of the glycolytic intermediate dihydroxyacetone phosphate (DHAP) to sn-glycerol 3-phosphate (G3P), the key precursor for phospholipid synthesis. The chain is Glycerol-3-phosphate dehydrogenase [NAD(P)+] from Lactococcus lactis subsp. cremoris (strain SK11).